The sequence spans 975 residues: Protein HIRA (975 aa).

WD repeat units follow at residues 10-50, 64-103, 123-162, 165-204, 214-256, 259-331, and 335-374; these read RHEG…KDND, DHFG…GTSE, GHTA…CTAV, GHSS…LAHR, GSTF…ATFD, GHNA…PLFV, and FFTQ…LGYR. Over residues 418 to 433 the composition is skewed to low complexity; it reads KKVSSVQQFQSPPKVS. Disordered regions lie at residues 418–510 and 948–975; these read KKVS…RSQN and NVEQ…NGAS. Over residues 435 to 445 the composition is skewed to polar residues; sequence DAPNPSTSVPN. Residues 478 to 492 are compositionally biased toward basic and acidic residues; that stretch reads KQREYRRPDGRKRII. Polar residues predominate over residues 499-510; that stretch reads PSNQDMSNRSQN. Residues 923–954 are a coiled coil; it reads ATNRKVQRLLNEFMDLLSEYEAAETNVEQMDV.

Belongs to the WD repeat HIR1 family.

Its subcellular location is the nucleus. In terms of biological role, histone chaperone involved in maintining knox genes silencing throughout leaf development. This Oryza sativa subsp. japonica (Rice) protein is Protein HIRA.